The chain runs to 161 residues: Large ribosomal subunit protein uL29c (161 aa).

The transit peptide at methionine 1–methionine 61 directs the protein to the chloroplast.

Belongs to the universal ribosomal protein uL29 family. In terms of assembly, part of the 50S ribosomal subunit.

The protein resides in the plastid. Its subcellular location is the chloroplast. The polypeptide is Large ribosomal subunit protein uL29c (RPL29) (Zea mays (Maize)).